A 520-amino-acid chain; its full sequence is Maturase K (520 aa).

The protein belongs to the intron maturase 2 family. MatK subfamily.

It localises to the plastid. The protein localises to the chloroplast. Usually encoded in the trnK tRNA gene intron. Probably assists in splicing its own and other chloroplast group II introns. In Iris cristata (Dwarf crested iris), this protein is Maturase K.